A 185-amino-acid chain; its full sequence is Orotate phosphoribosyltransferase (185 aa).

5-phospho-alpha-D-ribose 1-diphosphate is bound by residues Arg-94, Lys-95, Lys-98, His-100, and Glu-120–Ser-128. Orotate contacts are provided by Thr-124 and Arg-152.

Belongs to the purine/pyrimidine phosphoribosyltransferase family. PyrE subfamily. In terms of assembly, homodimer. Mg(2+) serves as cofactor.

The catalysed reaction is orotidine 5'-phosphate + diphosphate = orotate + 5-phospho-alpha-D-ribose 1-diphosphate. It participates in pyrimidine metabolism; UMP biosynthesis via de novo pathway; UMP from orotate: step 1/2. Functionally, catalyzes the transfer of a ribosyl phosphate group from 5-phosphoribose 1-diphosphate to orotate, leading to the formation of orotidine monophosphate (OMP). In Thermococcus kodakarensis (strain ATCC BAA-918 / JCM 12380 / KOD1) (Pyrococcus kodakaraensis (strain KOD1)), this protein is Orotate phosphoribosyltransferase.